We begin with the raw amino-acid sequence, 576 residues long: Arginine--tRNA ligase (576 aa).

The short motif at 122-132 (PNVAKEMHVGH) is the 'HIGH' region element.

It belongs to the class-I aminoacyl-tRNA synthetase family. In terms of assembly, monomer.

Its subcellular location is the cytoplasm. It carries out the reaction tRNA(Arg) + L-arginine + ATP = L-arginyl-tRNA(Arg) + AMP + diphosphate. The sequence is that of Arginine--tRNA ligase from Sodalis glossinidius (strain morsitans).